The sequence spans 572 residues: Oxygen-dependent choline dehydrogenase (572 aa).

Residue Asp7 to Glu36 coordinates FAD. Residue His474 is the Proton acceptor of the active site.

This sequence belongs to the GMC oxidoreductase family. Requires FAD as cofactor.

The enzyme catalyses choline + A = betaine aldehyde + AH2. The catalysed reaction is betaine aldehyde + NAD(+) + H2O = glycine betaine + NADH + 2 H(+). It functions in the pathway amine and polyamine biosynthesis; betaine biosynthesis via choline pathway; betaine aldehyde from choline (cytochrome c reductase route): step 1/1. In terms of biological role, involved in the biosynthesis of the osmoprotectant glycine betaine. Catalyzes the oxidation of choline to betaine aldehyde and betaine aldehyde to glycine betaine at the same rate. This is Oxygen-dependent choline dehydrogenase from Paraburkholderia phymatum (strain DSM 17167 / CIP 108236 / LMG 21445 / STM815) (Burkholderia phymatum).